A 412-amino-acid chain; its full sequence is MTLRRRGEKATISIQEHMAIDVCPGPIRPIKQISDYFPRFPRGLPPTAAPRASAPPDAPARSPAATAGPRSPSDGARDDDEDVDQLFGAYGASPGPSPGPSPVRPPAKPPEDEPDADGYESDDCTALGTLDFSLLYDQENNALHCTISKAKGLKPMDHNGLADPYVKLHLLPGASKANKLRTKTLRNTLNPSWNETLTYYGITDEDMIRKTLRISVCDEDKFRHNEFIGETRVPLKKLKPNHTKTFSICLEKQLPVDKAEDKSLEERGRILISLKYSSQKQGLLVGIVRCAHLAAMDANGYSDPYVKTYLKPDVDKKSKHKTAVKKKTLNPEFNEEFCYEIKHGDLAKKTLEVTVWDYDIGKSNDFIGGVVLGINAKGERLKHWFDCLKNKDKRIERWHTLTNEIPGAVLSD.

Residues 1-36 (MTLRRRGEKATISIQEHMAIDVCPGPIRPIKQISDY) form a negatively regulates targeting to plasma membrane region. Positions 1-90 (MTLRRRGEKA…EDVDQLFGAY (90 aa)) are mediates interaction with DYNLT1. A disordered region spans residues 38–123 (PRFPRGLPPT…PDADGYESDD (86 aa)). The span at 49-73 (APRASAPPDAPARSPAATAGPRSPS) shows a compositional bias: low complexity. The segment covering 95 to 108 (GPSPGPSPVRPPAK) has biased composition (pro residues). A compositionally biased stretch (acidic residues) spans 112 to 123 (DEPDADGYESDD). 2 C2 domains span residues 126-250 (ALGT…SICL) and 266-399 (ERGR…ERWH). Residues Asp157, Asp163, Asp218, Asp220, Asp297, Asp303, Asp357, Asp359, and Asp365 each contribute to the Ca(2+) site. Positions 257–375 (DKAEDKSLEE…FIGGVVLGIN (119 aa)) are mediates interaction with STXBP3. Ser411 carries the phosphoserine modification.

As to quaternary structure, interacts with STX4; the interaction is calcium-dependent, increased by insulin and glucose, and mediates vesicle fusion with plasma membrane in pancreatic cells and adipocytes. Interacts with STXBP3; the interaction is direct, occurs at the cell membrane and regulates glucose-stimulated insulin secretion. Interacts with cytoplasmic dynein light chain DYNLT1. Interacts with the SNARE (soluble N-ethylmaleimide-sensitive factor attached protein receptor) complex composed of SNAP25, STX1A and VAMP2; the interaction is calcium-dependent and competitive with SYT1. May interact with UNC13A; the interaction mediates targeting to the plasma membrane. Requires Ca(2+) as cofactor. Expressed in brain; highly enriched in neurons.

It localises to the cytoplasm. It is found in the cytoplasmic granule. Its subcellular location is the cell membrane. Calcium sensor which positively regulates SNARE-dependent fusion of vesicles with membranes. Binds phospholipids in a calcium-dependent manner and may act at the priming stage of fusion by modifying membrane curvature to stimulate fusion. Involved in calcium-triggered exocytosis in chromaffin cells and calcium-dependent spontaneous release of neurotransmitter in absence of action potentials in neuronal cells. Involved both in glucose-stimulated insulin secretion in pancreatic cells and insulin-dependent GLUT4 transport to the plasma membrane in adipocytes. The sequence is that of Double C2-like domain-containing protein beta (Doc2b) from Rattus norvegicus (Rat).